The sequence spans 162 residues: MKPIKTYDIKEEELAKTAYATIKTNKGNITLELFYKDAPQAVSNFVTLAKEGFYNGLNFHRVIAGFVAQGGCPYGTGTGGPEHRIKCEVAHNPNKHQRGSISMAHAGRDTGGSQFFLCFVDLPHLDGEHTVFGKITSAESLSVLDKIKQGDIIESVVFSPSL.

The PPIase cyclophilin-type domain occupies 16-162 (KTAYATIKTN…IESVVFSPSL (147 aa)).

The protein belongs to the cyclophilin-type PPIase family.

The enzyme catalyses [protein]-peptidylproline (omega=180) = [protein]-peptidylproline (omega=0). In terms of biological role, PPIases accelerate the folding of proteins. It catalyzes the cis-trans isomerization of proline imidic peptide bonds in oligopeptides. This is Peptidyl-prolyl cis-trans isomerase (ppiA) from Helicobacter pylori (strain J99 / ATCC 700824) (Campylobacter pylori J99).